The following is a 407-amino-acid chain: MKQQLLERFLSYVSFNTQSDGRSQNVPSTHSQFVFAQHLRQELVSLGFEDVQLSDKGYLTATVPANVEGVACIGFIAHLDTAPDYSGENVSPQIIENYNGEDIQLGLEEVLSPKQFSSLNQYIGQTLITTDGSSLLGGDDKAGIAEIISALHHLLTHPEIPHGKIRLCFTPDEEIGRGADHFDVESFGAQWAYTIDGGQVGELEYENFNAATAVVTAMGNNCHPGTAYGVMVNAQTIAARFHAKMPLKDTPEHSRDYDGFFHLLGMEGVTEKATLTYIIRDFDLELFEQRKRWLTELVEKYNAELSIGQLTIDIQDSYLNMKQQVLPHPHIIDIAKQAMQNLAIEPIIKPIRGGTDGSRLSYMGLPCPNLFTGGHNFHGKHEYVCVESMVKATETIVEIAKLTAQHK.

A Zn(2+)-binding site is contributed by His78. Asp80 is an active-site residue. Residue Asp139 coordinates Zn(2+). Residue Glu173 is the Proton acceptor of the active site. Zn(2+) contacts are provided by Glu174, Asp196, and His378.

This sequence belongs to the peptidase M20B family. The cofactor is Zn(2+).

It localises to the cytoplasm. It catalyses the reaction Release of the N-terminal residue from a tripeptide.. Cleaves the N-terminal amino acid of tripeptides. This Shewanella halifaxensis (strain HAW-EB4) protein is Peptidase T.